The primary structure comprises 235 residues: Thaumatin I (235 aa).

The signal sequence occupies residues 1–22 (MAATTCFFFLFPFLLLLTLSRA). 8 disulfide bridges follow: cysteine 31/cysteine 226, cysteine 78/cysteine 88, cysteine 93/cysteine 99, cysteine 143/cysteine 215, cysteine 148/cysteine 199, cysteine 156/cysteine 167, cysteine 171/cysteine 180, and cysteine 181/cysteine 186. The propeptide at 230–235 (LELEDE) is removed in mature form.

Belongs to the thaumatin family.

The protein resides in the cytoplasmic vesicle. Its function is as follows. Taste-modifying protein; intensely sweet-tasting. It is 100000 times sweeter than sucrose on a molar basis. This chain is Thaumatin I, found in Thaumatococcus daniellii (Katemfe).